The sequence spans 357 residues: ATP-dependent 6-phosphofructokinase (357 aa).

ATP contacts are provided by residues glycine 12, 80–81 (KG), and 107–110 (GDGS). Aspartate 108 serves as a coordination point for Mg(2+). Substrate contacts are provided by residues 131–133 (TID), arginine 168, 175–177 (MGR), glutamate 229, arginine 272, and 278–281 (HIQR). Residue aspartate 133 is the Proton acceptor of the active site.

This sequence belongs to the phosphofructokinase type A (PFKA) family. Mixed-substrate PFK group III subfamily. In terms of assembly, homodimer or homotetramer. The cofactor is Mg(2+).

It localises to the cytoplasm. It catalyses the reaction beta-D-fructose 6-phosphate + ATP = beta-D-fructose 1,6-bisphosphate + ADP + H(+). It participates in carbohydrate degradation; glycolysis; D-glyceraldehyde 3-phosphate and glycerone phosphate from D-glucose: step 3/4. With respect to regulation, subject to allosteric activation by ADP and other diphosphonucleosides, and inhibition by phosphoenolpyruvate. In terms of biological role, catalyzes the phosphorylation of D-fructose 6-phosphate to fructose 1,6-bisphosphate by ATP, the first committing step of glycolysis. This chain is ATP-dependent 6-phosphofructokinase, found in Trichormus variabilis (strain ATCC 29413 / PCC 7937) (Anabaena variabilis).